The chain runs to 185 residues: MSRLLEESLKTCPIVKRGEYHYFIHPISDGVPLVEPELLRDVSTRVIKMIDTEVDKIVTAEAMGIPIVTAVSIATDIPYVIMRKREYLLEGEIPVHQETGYSKGELYLNGINKGDKVVILDDVISTGGTLVAIINALKRAGADIKDVLCIIDRGNGQNVVEEKTGYKVKTLVKIEVVDGKVQILE.

Belongs to the purine/pyrimidine phosphoribosyltransferase family. Archaeal HPRT subfamily. As to quaternary structure, homodimer.

Its subcellular location is the cytoplasm. It catalyses the reaction IMP + diphosphate = hypoxanthine + 5-phospho-alpha-D-ribose 1-diphosphate. The catalysed reaction is GMP + diphosphate = guanine + 5-phospho-alpha-D-ribose 1-diphosphate. It participates in purine metabolism; IMP biosynthesis via salvage pathway; IMP from hypoxanthine: step 1/1. Catalyzes a salvage reaction resulting in the formation of IMP that is energically less costly than de novo synthesis. The polypeptide is Hypoxanthine/guanine phosphoribosyltransferase (Methanococcus maripaludis (strain C6 / ATCC BAA-1332)).